The chain runs to 545 residues: CTP synthase (545 aa).

The amidoligase domain stretch occupies residues 1 to 266 (MTTNYIFVTG…DDYICKRFSL (266 aa)). Ser-14 provides a ligand contact to CTP. Position 14 (Ser-14) interacts with UTP. ATP is bound by residues 15–20 (SLGKGI) and Asp-72. Positions 72 and 140 each coordinate Mg(2+). CTP-binding positions include 147–149 (DIE), 187–192 (KTKPTQ), and Lys-223. UTP contacts are provided by residues 187 to 192 (KTKPTQ) and Lys-223. 239 to 241 (KDV) contacts ATP. The Glutamine amidotransferase type-1 domain occupies 291–542 (TIGMIGKYVE…VKAAGEYQKR (252 aa)). Gly-352 lines the L-glutamine pocket. Cys-379 functions as the Nucleophile; for glutamine hydrolysis in the catalytic mechanism. L-glutamine is bound by residues 380–383 (LGMQ), Glu-403, and Arg-470. Active-site residues include His-515 and Glu-517.

The protein belongs to the CTP synthase family. Homotetramer.

The catalysed reaction is UTP + L-glutamine + ATP + H2O = CTP + L-glutamate + ADP + phosphate + 2 H(+). It catalyses the reaction L-glutamine + H2O = L-glutamate + NH4(+). It carries out the reaction UTP + NH4(+) + ATP = CTP + ADP + phosphate + 2 H(+). It functions in the pathway pyrimidine metabolism; CTP biosynthesis via de novo pathway; CTP from UDP: step 2/2. With respect to regulation, allosterically activated by GTP, when glutamine is the substrate; GTP has no effect on the reaction when ammonia is the substrate. The allosteric effector GTP functions by stabilizing the protein conformation that binds the tetrahedral intermediate(s) formed during glutamine hydrolysis. Inhibited by the product CTP, via allosteric rather than competitive inhibition. Catalyzes the ATP-dependent amination of UTP to CTP with either L-glutamine or ammonia as the source of nitrogen. Regulates intracellular CTP levels through interactions with the four ribonucleotide triphosphates. The sequence is that of CTP synthase from Yersinia enterocolitica serotype O:8 / biotype 1B (strain NCTC 13174 / 8081).